Consider the following 432-residue polypeptide: Glutamate-1-semialdehyde 2,1-aminomutase (432 aa).

At K272 the chain carries N6-(pyridoxal phosphate)lysine.

The protein belongs to the class-III pyridoxal-phosphate-dependent aminotransferase family. HemL subfamily. Homodimer. It depends on pyridoxal 5'-phosphate as a cofactor.

It is found in the cytoplasm. The catalysed reaction is (S)-4-amino-5-oxopentanoate = 5-aminolevulinate. Its pathway is porphyrin-containing compound metabolism; protoporphyrin-IX biosynthesis; 5-aminolevulinate from L-glutamyl-tRNA(Glu): step 2/2. It functions in the pathway porphyrin-containing compound metabolism; chlorophyll biosynthesis. The protein is Glutamate-1-semialdehyde 2,1-aminomutase of Gloeobacter violaceus (strain ATCC 29082 / PCC 7421).